Consider the following 490-residue polypeptide: MLDFEAVLPAIGRQTVLCVGDLMLDEFVYGEVSRISPEAPAPVIAVQRSEINVGGAGNVARNIAALGARCIFVGLIGDDAAGRTLSAALAAEPLIEPVLVCDESRPTTRKVRFVSAHFSTHMLRADWEIAAPASLMVEQQLIDAILQQLPAADIVLLSDYAKGVLTARLIREVIDAARKLNKRVIVDPKSPNFALYRGATLLTPNRKEFAEATRSRADSQAEIAASAREAIAVADCEAILVTQSEQGMTLVPRDGEAIHVPAHPVKVRDVSGAGDTVAAVLAVMLAAGADWDVALRAANAGAAVAVSKNGTASVTLGELRRKVLPPASLAAEEKIVAAGGDLEPHLVEWRAEGLRIGFTNGCFDILHPGHVKVLTAARGACDRLIVGLNSDASVKRLKGESRPVQDERARAEVLAALEAVDLVVIFEEDTPLQLITRIVPSVLVKGGDYTREQVVGHEIVAAQGGEVVLVDILPGHSTTTLVARAQNGKA.

Positions 1 to 330 (MLDFEAVLPA…RKVLPPASLA (330 aa)) are ribokinase. ATP is bound at residue 205 to 208 (NRKE). The active site involves D275. The tract at residues 358–490 (FTNGCFDILH…LVARAQNGKA (133 aa)) is cytidylyltransferase.

It in the N-terminal section; belongs to the carbohydrate kinase PfkB family. The protein in the C-terminal section; belongs to the cytidylyltransferase family. In terms of assembly, homodimer.

It carries out the reaction D-glycero-beta-D-manno-heptose 7-phosphate + ATP = D-glycero-beta-D-manno-heptose 1,7-bisphosphate + ADP + H(+). The enzyme catalyses D-glycero-beta-D-manno-heptose 1-phosphate + ATP + H(+) = ADP-D-glycero-beta-D-manno-heptose + diphosphate. The protein operates within nucleotide-sugar biosynthesis; ADP-L-glycero-beta-D-manno-heptose biosynthesis; ADP-L-glycero-beta-D-manno-heptose from D-glycero-beta-D-manno-heptose 7-phosphate: step 1/4. Its pathway is nucleotide-sugar biosynthesis; ADP-L-glycero-beta-D-manno-heptose biosynthesis; ADP-L-glycero-beta-D-manno-heptose from D-glycero-beta-D-manno-heptose 7-phosphate: step 3/4. Functionally, catalyzes the phosphorylation of D-glycero-D-manno-heptose 7-phosphate at the C-1 position to selectively form D-glycero-beta-D-manno-heptose-1,7-bisphosphate. Its function is as follows. Catalyzes the ADP transfer from ATP to D-glycero-beta-D-manno-heptose 1-phosphate, yielding ADP-D-glycero-beta-D-manno-heptose. This Rhodopseudomonas palustris (strain BisB18) protein is Bifunctional protein HldE.